The chain runs to 917 residues: Coiled-coil domain-containing protein 186 (917 aa).

3 disordered regions span residues 1 to 52 (MKIR…SGDE), 97 to 118 (SCANTDTCPEDSGQIDDFPGGD), and 701 to 769 (TQRR…SVAV). The span at 33-44 (TTEKTSELRDDS) shows a compositional bias: basic and acidic residues. Residues 220–736 (RYLQQELTVK…TENGNHDKDI (517 aa)) are a coiled coil. The span at 722 to 736 (RKLEQTENGNHDKDI) shows a compositional bias: basic and acidic residues. Residues 737–748 (SSMGSRSSSSGS) show a composition bias toward low complexity. Phosphoserine is present on serine 759. Coiled coils occupy residues 778 to 822 (AMLI…IQSY) and 874 to 913 (KLQAVLEDTLLKNITLKENLQTLGTEIERLIKHQHELEQR).

As to expression, expressed in postnatal germ cells.

The sequence is that of Coiled-coil domain-containing protein 186 (Ccdc186) from Mus musculus (Mouse).